Here is a 360-residue protein sequence, read N- to C-terminus: Uroporphyrinogen decarboxylase (360 aa).

Substrate contacts are provided by residues 27-31, Phe46, Asp77, Tyr154, Thr209, and His327; that span reads RQSGR.

Belongs to the uroporphyrinogen decarboxylase family. As to quaternary structure, homodimer.

It localises to the cytoplasm. The enzyme catalyses uroporphyrinogen III + 4 H(+) = coproporphyrinogen III + 4 CO2. It participates in porphyrin-containing compound metabolism; protoporphyrin-IX biosynthesis; coproporphyrinogen-III from 5-aminolevulinate: step 4/4. Functionally, catalyzes the decarboxylation of four acetate groups of uroporphyrinogen-III to yield coproporphyrinogen-III. This chain is Uroporphyrinogen decarboxylase, found in Wigglesworthia glossinidia brevipalpis.